Consider the following 471-residue polypeptide: UDP-N-acetylmuramate--L-alanine ligase (471 aa).

Residue 112-118 (GTHGKTT) coordinates ATP.

The protein belongs to the MurCDEF family.

Its subcellular location is the cytoplasm. It catalyses the reaction UDP-N-acetyl-alpha-D-muramate + L-alanine + ATP = UDP-N-acetyl-alpha-D-muramoyl-L-alanine + ADP + phosphate + H(+). It functions in the pathway cell wall biogenesis; peptidoglycan biosynthesis. Cell wall formation. This is UDP-N-acetylmuramate--L-alanine ligase from Cupriavidus metallidurans (strain ATCC 43123 / DSM 2839 / NBRC 102507 / CH34) (Ralstonia metallidurans).